A 324-amino-acid polypeptide reads, in one-letter code: Ribosomal RNA small subunit methyltransferase H (324 aa).

Residues 40–42 (AGH), Asp-60, Leu-94, Asp-108, and His-115 each bind S-adenosyl-L-methionine. Residues 301–324 (EEMKVNTRSRSAKLRVAERTGEDG) form a disordered region. Over residues 315-324 (RVAERTGEDG) the composition is skewed to basic and acidic residues.

Belongs to the methyltransferase superfamily. RsmH family.

The protein resides in the cytoplasm. It catalyses the reaction cytidine(1402) in 16S rRNA + S-adenosyl-L-methionine = N(4)-methylcytidine(1402) in 16S rRNA + S-adenosyl-L-homocysteine + H(+). Functionally, specifically methylates the N4 position of cytidine in position 1402 (C1402) of 16S rRNA. In Maridesulfovibrio salexigens (strain ATCC 14822 / DSM 2638 / NCIMB 8403 / VKM B-1763) (Desulfovibrio salexigens), this protein is Ribosomal RNA small subunit methyltransferase H.